The chain runs to 214 residues: Putative F-box protein At5g15670 (214 aa).

One can recognise an F-box domain in the interval 22-68 (RNKFDEIPHDLVIEILGRLPAKSVARFLTVSKLWATSIRSLDFIKSY).

The chain is Putative F-box protein At5g15670 from Arabidopsis thaliana (Mouse-ear cress).